The sequence spans 80 residues: Acyl carrier protein (80 aa).

The 76-residue stretch at 4–79 (EAILEKVRSI…DAVKYIEEKQ (76 aa)) folds into the Carrier domain. Residue Ser-39 is modified to O-(pantetheine 4'-phosphoryl)serine.

This sequence belongs to the acyl carrier protein (ACP) family. 4'-phosphopantetheine is transferred from CoA to a specific serine of apo-ACP by AcpS. This modification is essential for activity because fatty acids are bound in thioester linkage to the sulfhydryl of the prosthetic group.

Its subcellular location is the cytoplasm. It participates in lipid metabolism; fatty acid biosynthesis. Carrier of the growing fatty acid chain in fatty acid biosynthesis. This Prochlorococcus marinus (strain NATL1A) protein is Acyl carrier protein.